A 397-amino-acid polypeptide reads, in one-letter code: Tyrosine aminotransferase (397 aa).

Residues glycine 34, tyrosine 66, tryptophan 131, and asparagine 184 each contribute to the substrate site. An N6-(pyridoxal phosphate)lysine modification is found at lysine 247. Arginine 375 provides a ligand contact to substrate.

Belongs to the class-I pyridoxal-phosphate-dependent aminotransferase family. Homodimer. Requires pyridoxal 5'-phosphate as cofactor.

It carries out the reaction L-tyrosine + 2-oxoglutarate = 3-(4-hydroxyphenyl)pyruvate + L-glutamate. It catalyses the reaction 4-methylsulfanyl-2-oxobutanoate + L-tyrosine = 3-(4-hydroxyphenyl)pyruvate + L-methionine. The catalysed reaction is an aromatic L-alpha-amino acid + 2-oxoglutarate = an aromatic oxo-acid + L-glutamate. The enzyme catalyses L-aspartate + 2-oxoglutarate = oxaloacetate + L-glutamate. It participates in amino-acid biosynthesis; L-methionine biosynthesis via salvage pathway; L-methionine from S-methyl-5-thio-alpha-D-ribose 1-phosphate: step 6/6. Inhibited by malate and nitrotyrosine by approximately 20% at the higher concentration. At 100 uM, canaline and carboxymethoxylamine inhibit aminotransferase activity by 35 and 70%, respectively. Addition of 1.0 mM carboxymethoxylamine lead to a complete inhibition of the aminotransferase activity. Functionally, catalyzes the formation of methionine from 2-keto-4-methylthiobutyrate (KMTB) primarily using aromatic amino acids (tyrosine, phenylalanine and tryptophan) or glutamate as the amino donors. Histidine, leucine, asparagine, or arginine are also functional amino donors but to a lesser extent. Can also use alpha-ketoglutarate, oxaloacetate and pyruvate as the amino acceptors. The sequence is that of Tyrosine aminotransferase (tyrB) from Klebsiella pneumoniae.